A 408-amino-acid polypeptide reads, in one-letter code: LL-diaminopimelate aminotransferase (408 aa).

2 residues coordinate substrate: Y15 and G42. Residues Y72, 108-109 (SK), Y132, N187, Y218, and 246-248 (SFS) each bind pyridoxal 5'-phosphate. K109, Y132, and N187 together coordinate substrate. N6-(pyridoxal phosphate)lysine is present on K249. Residues R257 and N292 each contribute to the pyridoxal 5'-phosphate site. Substrate is bound by residues N292 and R388.

The protein belongs to the class-I pyridoxal-phosphate-dependent aminotransferase family. LL-diaminopimelate aminotransferase subfamily. In terms of assembly, homodimer. Pyridoxal 5'-phosphate is required as a cofactor.

It catalyses the reaction (2S,6S)-2,6-diaminopimelate + 2-oxoglutarate = (S)-2,3,4,5-tetrahydrodipicolinate + L-glutamate + H2O + H(+). It functions in the pathway amino-acid biosynthesis; L-lysine biosynthesis via DAP pathway; LL-2,6-diaminopimelate from (S)-tetrahydrodipicolinate (aminotransferase route): step 1/1. Involved in the synthesis of meso-diaminopimelate (m-DAP or DL-DAP), required for both lysine and peptidoglycan biosynthesis. Catalyzes the direct conversion of tetrahydrodipicolinate to LL-diaminopimelate. In Synechococcus sp. (strain WH7803), this protein is LL-diaminopimelate aminotransferase.